The following is an 88-amino-acid chain: Small ribosomal subunit protein uS17 (88 aa).

Belongs to the universal ribosomal protein uS17 family. As to quaternary structure, part of the 30S ribosomal subunit.

One of the primary rRNA binding proteins, it binds specifically to the 5'-end of 16S ribosomal RNA. The polypeptide is Small ribosomal subunit protein uS17 (Marinobacter nauticus (strain ATCC 700491 / DSM 11845 / VT8) (Marinobacter aquaeolei)).